The sequence spans 120 residues: Large ribosomal subunit protein uL14 (120 aa).

It belongs to the universal ribosomal protein uL14 family. In terms of assembly, part of the 50S ribosomal subunit. Forms a cluster with proteins L3 and L19. In the 70S ribosome, L14 and L19 interact and together make contacts with the 16S rRNA in bridges B5 and B8.

Its function is as follows. Binds to 23S rRNA. Forms part of two intersubunit bridges in the 70S ribosome. The protein is Large ribosomal subunit protein uL14 of Dictyoglomus thermophilum (strain ATCC 35947 / DSM 3960 / H-6-12).